Consider the following 428-residue polypeptide: tRNA(Ile2) 2-agmatinylcytidine synthetase TiaS (428 aa).

It belongs to the TiaS family.

It is found in the cytoplasm. The catalysed reaction is cytidine(34) in tRNA(Ile2) + agmatine + ATP + H2O = 2-agmatinylcytidine(34) in tRNA(Ile2) + AMP + 2 phosphate + 2 H(+). Functionally, ATP-dependent agmatine transferase that catalyzes the formation of 2-agmatinylcytidine (agm2C) at the wobble position (C34) of tRNA(Ile2), converting the codon specificity from AUG to AUA. The protein is tRNA(Ile2) 2-agmatinylcytidine synthetase TiaS of Methanosarcina acetivorans (strain ATCC 35395 / DSM 2834 / JCM 12185 / C2A).